Here is a 320-residue protein sequence, read N- to C-terminus: Ferrochelatase (320 aa).

Residues H194 and E275 each coordinate Fe cation.

Belongs to the ferrochelatase family. In terms of assembly, monomer.

The protein localises to the cytoplasm. It carries out the reaction heme b + 2 H(+) = protoporphyrin IX + Fe(2+). It participates in porphyrin-containing compound metabolism; protoheme biosynthesis; protoheme from protoporphyrin-IX: step 1/1. Its function is as follows. Catalyzes the ferrous insertion into protoporphyrin IX. This chain is Ferrochelatase, found in Escherichia coli O45:K1 (strain S88 / ExPEC).